A 502-amino-acid polypeptide reads, in one-letter code: Lysine--tRNA ligase (502 aa).

E412 and E419 together coordinate Mg(2+).

It belongs to the class-II aminoacyl-tRNA synthetase family. As to quaternary structure, homodimer. Requires Mg(2+) as cofactor.

Its subcellular location is the cytoplasm. It catalyses the reaction tRNA(Lys) + L-lysine + ATP = L-lysyl-tRNA(Lys) + AMP + diphosphate. This Histophilus somni (strain 2336) (Haemophilus somnus) protein is Lysine--tRNA ligase.